We begin with the raw amino-acid sequence, 660 residues long: Junctophilin-1 (660 aa).

At 1-638 (MTGGRFDFDD…EKEANSGPNS (638 aa)) the chain is on the cytoplasmic side. MORN repeat units lie at residues 14 to 36 (YCGG…KGQG), 38 to 59 (YSGS…SGNT), 60 to 82 (YQGY…KWMY), 106 to 128 (YEGT…DGGT), and 129 to 151 (YQGQ…PYGM). Residues Ser-157, Ser-216, and Ser-220 each carry the phosphoserine modification. Residues 228 to 247 (SKSSISSKRSSVRSDAAMSR) are disordered. MORN repeat units lie at residues 281-303 (YMGE…NGMK) and 304-326 (YEGE…DGSK). Residues 437 to 454 (NPEEKVLEKPPSPKESPH) show a composition bias toward basic and acidic residues. The tract at residues 437-631 (NPEEKVLEKP…NDTCPSLEKE (195 aa)) is disordered. Ser-452 carries the phosphoserine modification. Thr-461 carries the phosphothreonine modification. Ser-465, Ser-469, and Ser-475 each carry phosphoserine. Positions 466–477 (PESSPKQSHSPQ) are enriched in low complexity. Composition is skewed to basic and acidic residues over residues 562–571 (PPEDREDDRG) and 598–612 (VAKE…KKSE). The chain crosses the membrane as a helical; Anchor for type IV membrane protein span at residues 639-659 (IMIVLVMLLNIGLAILFVHFL).

This sequence belongs to the junctophilin family. Specifically expressed in skeletal muscle. Weakly expressed in embryos and neonates. Abundant in young adult muscles.

The protein localises to the cell membrane. It is found in the endoplasmic reticulum membrane. Its subcellular location is the sarcoplasmic reticulum membrane. In terms of biological role, junctophilins contribute to the formation of junctional membrane complexes (JMCs) which link the plasma membrane with the endoplasmic or sarcoplasmic reticulum in excitable cells. Provides a structural foundation for functional cross-talk between the cell surface and intracellular calcium release channels. JPH1 contributes to the construction of the skeletal muscle triad by linking the t-tubule (transverse-tubule) and SR (sarcoplasmic reticulum) membranes. This Mus musculus (Mouse) protein is Junctophilin-1 (Jph1).